Here is a 378-residue protein sequence, read N- to C-terminus: Deoxyguanosinetriphosphate triphosphohydrolase-like protein (378 aa).

An HD domain is found at 62–198; that stretch reads RLTHTIEVAQ…AAVADDVAYN (137 aa).

The protein belongs to the dGTPase family. Type 2 subfamily.

This Paracoccus denitrificans (strain Pd 1222) protein is Deoxyguanosinetriphosphate triphosphohydrolase-like protein.